The following is a 481-amino-acid chain: UDP-N-acetylmuramate--L-alanine ligase (481 aa).

126–132 (GTHGKTT) serves as a coordination point for ATP.

Belongs to the MurCDEF family.

It localises to the cytoplasm. The enzyme catalyses UDP-N-acetyl-alpha-D-muramate + L-alanine + ATP = UDP-N-acetyl-alpha-D-muramoyl-L-alanine + ADP + phosphate + H(+). Its pathway is cell wall biogenesis; peptidoglycan biosynthesis. Its function is as follows. Cell wall formation. This is UDP-N-acetylmuramate--L-alanine ligase from Marinobacter nauticus (strain ATCC 700491 / DSM 11845 / VT8) (Marinobacter aquaeolei).